The primary structure comprises 277 residues: Phosphatidylglycerol--prolipoprotein diacylglyceryl transferase (277 aa).

Helical transmembrane passes span 16–36 (LGPI…LFGW), 58–78 (FLTW…VLFY), 93–113 (IWSG…AILL), and 119–139 (GFSP…GLFL). An a 1,2-diacyl-sn-glycero-3-phospho-(1'-sn-glycerol)-binding site is contributed by Arg-141. 3 helical membrane passes run 182 to 202 (AALE…KPAV), 207 to 227 (GTLS…GEVF), and 239 to 259 (FGVT…LWIL).

Belongs to the Lgt family.

The protein resides in the cell inner membrane. It catalyses the reaction L-cysteinyl-[prolipoprotein] + a 1,2-diacyl-sn-glycero-3-phospho-(1'-sn-glycerol) = an S-1,2-diacyl-sn-glyceryl-L-cysteinyl-[prolipoprotein] + sn-glycerol 1-phosphate + H(+). Its pathway is protein modification; lipoprotein biosynthesis (diacylglyceryl transfer). Functionally, catalyzes the transfer of the diacylglyceryl group from phosphatidylglycerol to the sulfhydryl group of the N-terminal cysteine of a prolipoprotein, the first step in the formation of mature lipoproteins. The sequence is that of Phosphatidylglycerol--prolipoprotein diacylglyceryl transferase from Rhodospirillum centenum (strain ATCC 51521 / SW).